A 388-amino-acid polypeptide reads, in one-letter code: Putative nickel insertion protein (388 aa).

Belongs to the LarC family.

The chain is Putative nickel insertion protein from Geobacter sulfurreducens (strain ATCC 51573 / DSM 12127 / PCA).